Consider the following 526-residue polypeptide: ATP-dependent RNA helicase DBP3 (526 aa).

Positions 1-33 (MVEEHKNKKRRQEDGPADVPEKKVKVSKSEKKD) are enriched in basic and acidic residues. Residues 1 to 86 (MVEEHKNKKR…SSQGYTQSES (86 aa)) are disordered. Over residues 34 to 65 (KKEKKEKKEKKEKKEKKEKKEKKEKKEKKKKY) the composition is skewed to basic residues. Over residues 69 to 86 (ATISGSAQSSQGYTQSES) the composition is skewed to polar residues. Residues 118-144 (LSFDQIQLNSKISAVVNKFPTPTPIQS) carry the Q motif motif. The 172-residue stretch at 147–318 (WPYLLSGKDV…STFMNQPVKV (172 aa)) folds into the Helicase ATP-binding domain. 160–167 (AETGSGKT) serves as a coordination point for ATP. The short motif at 265 to 268 (DEAD) is the DEAD box element. A Helicase C-terminal domain is found at 334-496 (QIVEVIEPFD…PVPDELLKFG (163 aa)).

The protein belongs to the DEAD box helicase family. DDX5/DBP2 subfamily.

It is found in the nucleus. It localises to the nucleolus. It catalyses the reaction ATP + H2O = ADP + phosphate + H(+). In terms of biological role, ATP-dependent RNA helicase required for 60S ribosomal subunit synthesis. Involved in efficient pre-rRNA processing, predominantly at site A3, which is necessary for the normal formation of 25S and 5.8S rRNAs. This chain is ATP-dependent RNA helicase DBP3 (DBP3), found in Scheffersomyces stipitis (strain ATCC 58785 / CBS 6054 / NBRC 10063 / NRRL Y-11545) (Yeast).